The chain runs to 483 residues: Glutamyl-tRNA(Gln) amidotransferase subunit A (483 aa).

Active-site charge relay system residues include Lys-76 and Ser-151. Ser-175 functions as the Acyl-ester intermediate in the catalytic mechanism.

This sequence belongs to the amidase family. GatA subfamily. In terms of assembly, heterotrimer of A, B and C subunits.

The enzyme catalyses L-glutamyl-tRNA(Gln) + L-glutamine + ATP + H2O = L-glutaminyl-tRNA(Gln) + L-glutamate + ADP + phosphate + H(+). Its function is as follows. Allows the formation of correctly charged Gln-tRNA(Gln) through the transamidation of misacylated Glu-tRNA(Gln) in organisms which lack glutaminyl-tRNA synthetase. The reaction takes place in the presence of glutamine and ATP through an activated gamma-phospho-Glu-tRNA(Gln). This is Glutamyl-tRNA(Gln) amidotransferase subunit A from Pseudomonas entomophila (strain L48).